The primary structure comprises 334 residues: Putative binding protein YtlA (334 aa).

Residues 1 to 23 (MNRWLRLGFACVGSIFLMFALAA) form the signal peptide. Cysteine 24 carries N-palmitoyl cysteine lipidation. The S-diacylglycerol cysteine moiety is linked to residue cysteine 24.

The protein belongs to the bacterial solute-binding protein SsuA/TauA family.

The protein localises to the cell membrane. The chain is Putative binding protein YtlA (ytlA) from Bacillus subtilis (strain 168).